A 170-amino-acid polypeptide reads, in one-letter code: Helix-loop-helix protein 3 (170 aa).

Residues 1–26 show a composition bias toward low complexity; that stretch reads MTASTSSTPSTSTKIPSSSKSSVTKQ. Disordered stretches follow at residues 1 to 42 and 118 to 170; these read MTAS…VDQV and TPSP…TETY. Residues 26-39 are basic motif; degenerate; the sequence is QTKQKRNERERKRV. The bHLH domain maps to 26 to 79; that stretch reads QTKQKRNERERKRVDQVNQGFVLLQERVPKAAGNKAKLSKVETLREAARYIQEL. Residues 30 to 40 show a composition bias toward basic and acidic residues; that stretch reads KRNERERKRVD. A helix-loop-helix motif region spans residues 40–79; it reads DQVNQGFVLLQERVPKAAGNKAKLSKVETLREAARYIQEL. Low complexity predominate over residues 143–157; that stretch reads SHYYQESSSSSASTS.

As to quaternary structure, efficient DNA binding requires dimerization with another bHLH protein. Forms a heterodimer with hlh-2. As to expression, expressed in the ADL sensory neurons.

It is found in the nucleus. In terms of biological role, probable transcriptional regulator. May mediate transcriptional activation by binding to the E-box motif 5'-CANNTG-3'. Plays a role in the differentiation of the hermaphrodite-specific motor neurons (HSN) that are required for normal egg laying. Might play a role in serotonin production by regulating expression of the tryptophan hydrolase tph-1 which catalyzes serotonin synthesis, in the HSN neurons. Also plays a role in HSN axon guidance towards the vulva and the ventral nerve cord, possibly by promoting the expression of the netrin receptor unc-40. Under feeding conditions, involved in the regulation of the srh-234 chemoreceptor encoding gene expression in the ADL sensory neurons. Together with hlh-2, involved in the induction of programmed cell death in the sister cells of the serotonergic neurosecretory motor (NSM) neurons, probably through the activation of egl-1 transcription. The sequence is that of Helix-loop-helix protein 3 from Caenorhabditis elegans.